Here is a 358-residue protein sequence, read N- to C-terminus: 3-dehydroquinate synthase (358 aa).

Residues 69-74 (DGEQYK), 103-107 (GVIGD), 127-128 (TT), Lys140, Lys149, and 167-170 (TLNT) each bind NAD(+). Glu182, His245, and His262 together coordinate Zn(2+).

It belongs to the sugar phosphate cyclases superfamily. Dehydroquinate synthase family. It depends on Co(2+) as a cofactor. Requires Zn(2+) as cofactor. The cofactor is NAD(+).

It localises to the cytoplasm. The enzyme catalyses 7-phospho-2-dehydro-3-deoxy-D-arabino-heptonate = 3-dehydroquinate + phosphate. It functions in the pathway metabolic intermediate biosynthesis; chorismate biosynthesis; chorismate from D-erythrose 4-phosphate and phosphoenolpyruvate: step 2/7. Its function is as follows. Catalyzes the conversion of 3-deoxy-D-arabino-heptulosonate 7-phosphate (DAHP) to dehydroquinate (DHQ). The chain is 3-dehydroquinate synthase from Hydrogenovibrio crunogenus (strain DSM 25203 / XCL-2) (Thiomicrospira crunogena).